A 274-amino-acid chain; its full sequence is Large ribosomal subunit protein uL2 (274 aa).

Disordered regions lie at residues 34-53 and 216-274; these read IAPIKNSGGRNSQGKMTMRY and RRPR…RRKK.

The protein belongs to the universal ribosomal protein uL2 family. Part of the 50S ribosomal subunit. Forms a bridge to the 30S subunit in the 70S ribosome.

One of the primary rRNA binding proteins. Required for association of the 30S and 50S subunits to form the 70S ribosome, for tRNA binding and peptide bond formation. It has been suggested to have peptidyltransferase activity; this is somewhat controversial. Makes several contacts with the 16S rRNA in the 70S ribosome. The chain is Large ribosomal subunit protein uL2 from Flavobacterium psychrophilum (strain ATCC 49511 / DSM 21280 / CIP 103535 / JIP02/86).